A 399-amino-acid chain; its full sequence is Acetate kinase (399 aa).

Asn8 lines the Mg(2+) pocket. Lys15 provides a ligand contact to ATP. Arg89 contributes to the substrate binding site. Asp147 serves as the catalytic Proton donor/acceptor. ATP-binding positions include 207–211, 284–286, and 332–336; these read HMGNG, DMR, and GIGEN. A Mg(2+)-binding site is contributed by Glu385.

The protein belongs to the acetokinase family. In terms of assembly, homodimer. Mg(2+) is required as a cofactor. The cofactor is Mn(2+).

Its subcellular location is the cytoplasm. The enzyme catalyses acetate + ATP = acetyl phosphate + ADP. It participates in metabolic intermediate biosynthesis; acetyl-CoA biosynthesis; acetyl-CoA from acetate: step 1/2. Functionally, catalyzes the formation of acetyl phosphate from acetate and ATP. Can also catalyze the reverse reaction. The protein is Acetate kinase of Streptococcus mutans serotype c (strain ATCC 700610 / UA159).